The chain runs to 149 residues: Calmodulin-2 (149 aa).

The residue at position 2 (Ala2) is an N-acetylalanine. 4 EF-hand domains span residues 8–43, 44–79, 81–116, and 117–149; these read EQIAEFKEAFSLFDKDGDGTITTKELGTVMRSLGQN, PTEAELQDMINEVDADGNGTIDFPEFLTMMARKMKD, DSEEEIREAFRVFDKDGNGFISAAELRHVMTNLGEK, and LTDEEVDEMVREADIDGDGQVNYEEFVEMMTSK. Residues Asp21, Asp23, Asp25, Thr27, Glu32, Asp57, Asp59, Asn61, Thr63, Glu68, Asp94, Asp96, Asn98, and Glu105 each coordinate Ca(2+). An N6,N6,N6-trimethyllysine modification is found at Lys116. Positions 130, 132, 134, 136, and 141 each coordinate Ca(2+).

This sequence belongs to the calmodulin family.

In terms of biological role, calmodulin mediates the control of a large number of enzymes, ion channels and other proteins by Ca(2+). Among the enzymes to be stimulated by the calmodulin-Ca(2+) complex are a number of protein kinases and phosphatases. This chain is Calmodulin-2 (CAM2), found in Branchiostoma lanceolatum (Common lancelet).